Here is a 350-residue protein sequence, read N- to C-terminus: tRNA uridine(34) hydroxylase (350 aa).

In terms of domain architecture, Rhodanese spans 146-240; the sequence is DDPDALFIDM…YARKAREQGL (95 aa). Residue cysteine 200 is the Cysteine persulfide intermediate of the active site.

The protein belongs to the TrhO family.

It carries out the reaction uridine(34) in tRNA + AH2 + O2 = 5-hydroxyuridine(34) in tRNA + A + H2O. In terms of biological role, catalyzes oxygen-dependent 5-hydroxyuridine (ho5U) modification at position 34 in tRNAs, the first step in 5-carboxymethoxyuridine (cmo5U) biosynthesis. May be part of an alternate pathway, which is able to bypass cmo5U biogenesis in a subset of tRNAs under aerobic conditions. The protein is tRNA uridine(34) hydroxylase of Escherichia coli (strain SE11).